We begin with the raw amino-acid sequence, 459 residues long: Kelch-like protein terF (459 aa).

Kelch repeat units follow at residues 92–144 (STVV…LVGD), 145–196 (EIFV…VVDG), 198–248 (IYYL…TVVV), 251–304 (TIYL…IYRD), 306–354 (LYIL…TIGS), and 355–405 (LIFT…VYKG).

The protein operates within secondary metabolite biosynthesis. In terms of biological role, kelch-like protein; part of the gene cluster that mediates the biosynthesis of terrein, a fungal metabolite with ecological, antimicrobial, antiproliferative, and antioxidative activities. The first step in the pathway is performed by the polyketide synthase terA that produces 4-hydroxy-6-methylpyranon (4-HMP), orsellinic acid (OA), and 2,3-dehydro-6-hydroxymellein (2,3-dehydro-6-HM) by condensing acetyl-CoA with two, three, or four malonyl-CoA units, respectively. 4-HMP and OA are not pathway intermediates, but are rather shunt or side products. 2,3-dehydro-6-HM is further converted to 6-hydroxymellein (6-HM) by the 6-hydroxymellein synthase terB. The monooxygenases terC and terD, the multicopper oxidase terE and the Kelch-like protein terF are then involved in the transformation of 6-HM to terrein. Even if they are co-regulated with the other terrein cluster genes, terH and terI seem to be dispensable for terrein production; whereas one or both of the 2 transporters terG and terJ are probably required for efficient secretion of metabolites. In Aspergillus terreus (strain NIH 2624 / FGSC A1156), this protein is Kelch-like protein terF.